Consider the following 157-residue polypeptide: Transcription elongation factor GreA (157 aa).

Residues M1 to V75 are a coiled coil.

This sequence belongs to the GreA/GreB family.

In terms of biological role, necessary for efficient RNA polymerase transcription elongation past template-encoded arresting sites. The arresting sites in DNA have the property of trapping a certain fraction of elongating RNA polymerases that pass through, resulting in locked ternary complexes. Cleavage of the nascent transcript by cleavage factors such as GreA or GreB allows the resumption of elongation from the new 3'terminus. GreA releases sequences of 2 to 3 nucleotides. The polypeptide is Transcription elongation factor GreA (Mycoplasma mycoides subsp. mycoides SC (strain CCUG 32753 / NCTC 10114 / PG1)).